Consider the following 504-residue polypeptide: Cytochrome P450 2D1 (504 aa).

Cys-446 is a binding site for heme.

The protein belongs to the cytochrome P450 family. Requires heme as cofactor.

It localises to the endoplasmic reticulum membrane. Its subcellular location is the microsome membrane. The catalysed reaction is an organic molecule + reduced [NADPH--hemoprotein reductase] + O2 = an alcohol + oxidized [NADPH--hemoprotein reductase] + H2O + H(+). Functionally, cytochromes P450 are a group of heme-thiolate monooxygenases. In liver microsomes, this enzyme is involved in an NADPH-dependent electron transport pathway. It oxidizes a variety of structurally unrelated compounds, including steroids, fatty acids, and xenobiotics. The sequence is that of Cytochrome P450 2D1 (Cyp2d1) from Rattus norvegicus (Rat).